The sequence spans 416 residues: UDP-N-acetylmuramoylalanine--D-glutamate ligase (416 aa).

Position 104-110 (104-110) interacts with ATP; that stretch reads GSNGKST.

Belongs to the MurCDEF family.

The protein localises to the cytoplasm. It catalyses the reaction UDP-N-acetyl-alpha-D-muramoyl-L-alanine + D-glutamate + ATP = UDP-N-acetyl-alpha-D-muramoyl-L-alanyl-D-glutamate + ADP + phosphate + H(+). Its pathway is cell wall biogenesis; peptidoglycan biosynthesis. Its function is as follows. Cell wall formation. Catalyzes the addition of glutamate to the nucleotide precursor UDP-N-acetylmuramoyl-L-alanine (UMA). This chain is UDP-N-acetylmuramoylalanine--D-glutamate ligase, found in Francisella tularensis subsp. tularensis (strain FSC 198).